Consider the following 369-residue polypeptide: Phosphoribosyl pyrophosphate synthase-associated protein 2 (369 aa).

Position 1 is an N-acetylmethionine (M1). Residue T5 is modified to Phosphothreonine. Phosphoserine is present on residues S219, S227, and S233.

This sequence belongs to the ribose-phosphate pyrophosphokinase family. In terms of assembly, binds to PRPS1 and PRPS2. Ubiquitous.

Seems to play a negative regulatory role in 5-phosphoribose 1-diphosphate synthesis. This chain is Phosphoribosyl pyrophosphate synthase-associated protein 2 (PRPSAP2), found in Homo sapiens (Human).